We begin with the raw amino-acid sequence, 594 residues long: Elongation factor 4 (594 aa).

Residues 2-184 form the tr-type G domain; that stretch reads KNIRNFSIIA…TIVAKVPAPE (183 aa). GTP contacts are provided by residues 14–19 and 131–134; these read DHGKST and NKID.

Belongs to the TRAFAC class translation factor GTPase superfamily. Classic translation factor GTPase family. LepA subfamily.

Its subcellular location is the cell inner membrane. The catalysed reaction is GTP + H2O = GDP + phosphate + H(+). Functionally, required for accurate and efficient protein synthesis under certain stress conditions. May act as a fidelity factor of the translation reaction, by catalyzing a one-codon backward translocation of tRNAs on improperly translocated ribosomes. Back-translocation proceeds from a post-translocation (POST) complex to a pre-translocation (PRE) complex, thus giving elongation factor G a second chance to translocate the tRNAs correctly. Binds to ribosomes in a GTP-dependent manner. This Francisella philomiragia subsp. philomiragia (strain ATCC 25017 / CCUG 19701 / FSC 153 / O#319-036) protein is Elongation factor 4.